Consider the following 236-residue polypeptide: 2-C-methyl-D-erythritol 4-phosphate cytidylyltransferase (236 aa).

Belongs to the IspD/TarI cytidylyltransferase family. IspD subfamily. In terms of assembly, homodimer.

The catalysed reaction is 2-C-methyl-D-erythritol 4-phosphate + CTP + H(+) = 4-CDP-2-C-methyl-D-erythritol + diphosphate. The protein operates within isoprenoid biosynthesis; isopentenyl diphosphate biosynthesis via DXP pathway; isopentenyl diphosphate from 1-deoxy-D-xylulose 5-phosphate: step 2/6. Its function is as follows. Catalyzes the formation of 4-diphosphocytidyl-2-C-methyl-D-erythritol from CTP and 2-C-methyl-D-erythritol 4-phosphate (MEP). The polypeptide is 2-C-methyl-D-erythritol 4-phosphate cytidylyltransferase (Salmonella arizonae (strain ATCC BAA-731 / CDC346-86 / RSK2980)).